The primary structure comprises 226 residues: Lipoprotein-releasing system ATP-binding protein LolD (226 aa).

Residues 5 to 226 (LKATNINKIY…LLRNGHWENY (222 aa)) form the ABC transporter domain. An ATP-binding site is contributed by 41–48 (GTSGSGKS).

This sequence belongs to the ABC transporter superfamily. Lipoprotein translocase (TC 3.A.1.125) family. As to quaternary structure, the complex is composed of two ATP-binding proteins (LolD) and two transmembrane proteins (LolC and LolE).

Its subcellular location is the cell inner membrane. Part of the ABC transporter complex LolCDE involved in the translocation of mature outer membrane-directed lipoproteins, from the inner membrane to the periplasmic chaperone, LolA. Responsible for the formation of the LolA-lipoprotein complex in an ATP-dependent manner. This is Lipoprotein-releasing system ATP-binding protein LolD from Psychrobacter cryohalolentis (strain ATCC BAA-1226 / DSM 17306 / VKM B-2378 / K5).